The following is a 476-amino-acid chain: Flavin-dependent halogenase otaD (476 aa).

FAD-binding residues include Gly14 and Gly17. Residues Ser304 and Gly305 each contribute to the chloride site. Val306 is an FAD binding site.

The protein belongs to the flavin-dependent halogenase family.

It carries out the reaction ochratoxin B + FADH2 + chloride + O2 = ochratoxin A + FAD + 2 H2O. The protein operates within mycotoxin biosynthesis. Functionally, flavin-dependent halogenase; part of the gene cluster that mediates the biosynthesis of ochratoxin A (OTA), a mycotoxin composed of a chlorinated type I polyketide dihydroisocoumarin moiety linked to L-phenylalanine, and demonstrated to have nephrotoxic, immunotoxic, genotoxic, neurotoxic, and teratogenic properties. OtaD chlorinates ochratoxin B (OTB) at the C-5 position to form OTA. The pathway begins with the highly reducing polyketide synthase otaA that catalyzes the formation of the isocoumarin group during the initial stages of biosynthesis, starting from one acetate and 4 malonate units, to originate the characteristic pentaketide skeleton 7-methylmellein (7-MM) of the OTA molecule. The newly identified cyclase otaY might be involved in the polyketide cyclization reaction during the initial steps of the OTA biosynthesis. 7-MM is then oxidized into 7-carboxymellein (also called ochratoxin beta) by the cytochrome P450 monooxygenase otaC. The NRPS encoded by the otaB gene is involved in the linking of phenylalanine to the dihydroisocoumarin ring. The reaction catalyzed by NRPS results in the production of ochratoxin B (OTB), which is the non-chlorinated analog of OTA and which subsequently serves as the substrate of the halogenase otaD for chlorination activity to form the final molecular structure of OTA, containing a chlorine atom in the C-5 position of the molecule. In Aspergillus niger (strain ATCC MYA-4892 / CBS 513.88 / FGSC A1513), this protein is Flavin-dependent halogenase otaD.